The following is a 193-amino-acid chain: uncharacterized protein (193 aa).

This is an uncharacterized protein from Aquifex aeolicus (strain VF5).